Reading from the N-terminus, the 622-residue chain is MSFDISKFPVLAKANTPEDLRKLPQNMLSQVSTELRQFLLQSVGNSSGHFASGLGTVELTVALHYVYNTPFDRLIWDVGHQAYPHKIMTGRRDEMHTIRQKNGLHPFPWREESEYDTFSVGHSGTSVSAALGMAIAADKEAAGRKVVAVIGDGAMTGGMVFEAMNHAGDLHKDMLVVLNDNEMSISENVGALNNHLAQLMSGRLYTTIREGSKKVLQGMPVIKEMAKRTEEHLKGMVVPGTLFEELGFNYIGPIDGHDVDALVETMRNMRSLKGPQILHIMTKKGRGYEPAEKDPIGWHAVPKFDPDQFKKPATKPGLPTFSQVFGKWLCDVAAQDDKLLAITPAMREGSGMVEFSQRFPEQYFDAAIAEQHAVTLAAGFACEGFKSVVAIYSTFLQRGYDQLIHDVALQRLPVLFAIDRGGIVGADGATHQGAFDLSFMRCIPNLVIMAPADENECRQMLYTGYRYQDGPTAVRYPRGFATGAEQIEQMTALPIGKGRVCRQGKKIAILNFGTTLASALEVAEQLDASVADMRFIKPLDVDLLHTLALEHDVIVTIEENAIMGGAGSGVIEALHKLKICKPVLQIGLPDEFIKHGAPDEIIAELRLDSKGILAQIQEYLSE.

Residues His80 and 121–123 (GHS) each bind thiamine diphosphate. Asp152 contributes to the Mg(2+) binding site. Thiamine diphosphate-binding positions include 153–154 (GA), Asn181, Tyr288, and Glu370. Asn181 contacts Mg(2+).

It belongs to the transketolase family. DXPS subfamily. As to quaternary structure, homodimer. It depends on Mg(2+) as a cofactor. The cofactor is thiamine diphosphate.

It carries out the reaction D-glyceraldehyde 3-phosphate + pyruvate + H(+) = 1-deoxy-D-xylulose 5-phosphate + CO2. It functions in the pathway metabolic intermediate biosynthesis; 1-deoxy-D-xylulose 5-phosphate biosynthesis; 1-deoxy-D-xylulose 5-phosphate from D-glyceraldehyde 3-phosphate and pyruvate: step 1/1. Functionally, catalyzes the acyloin condensation reaction between C atoms 2 and 3 of pyruvate and glyceraldehyde 3-phosphate to yield 1-deoxy-D-xylulose-5-phosphate (DXP). This is 1-deoxy-D-xylulose-5-phosphate synthase from Shewanella denitrificans (strain OS217 / ATCC BAA-1090 / DSM 15013).